We begin with the raw amino-acid sequence, 202 residues long: Lipid A acyltransferase PagP (202 aa).

An N-terminal signal peptide occupies residues 1–25 (MNYKDIINACILSGVFLLHSPSALA). Active-site residues include His74, Asp117, and Ser118.

It belongs to the lipid A palmitoyltransferase family. As to quaternary structure, homodimer.

The protein resides in the cell outer membrane. It carries out the reaction a lipid A + a 1,2-diacyl-sn-glycero-3-phosphocholine = a hepta-acyl lipid A + a 2-acyl-sn-glycero-3-phosphocholine. The enzyme catalyses a lipid IVA + a 1,2-diacyl-sn-glycero-3-phosphocholine = a lipid IVB + a 2-acyl-sn-glycero-3-phosphocholine. The catalysed reaction is a lipid IIA + a 1,2-diacyl-sn-glycero-3-phosphocholine = a lipid IIB + a 2-acyl-sn-glycero-3-phosphocholine. Transfers a fatty acid residue from the sn-1 position of a phospholipid to the N-linked hydroxyfatty acid chain on the proximal unit of lipid A or its precursors. The polypeptide is Lipid A acyltransferase PagP (Yersinia pseudotuberculosis serotype IB (strain PB1/+)).